The sequence spans 607 residues: 2-isopropylmalate synthase (607 aa).

The segment covering 1–10 (MASFSESLSQ) has biased composition (polar residues). Positions 1-40 (MASFSESLSQDPADAYKSAPSITKPMGPPSPGQPQWNPQR) are disordered. A Pyruvate carboxyltransferase domain is found at 75 to 349 (PLWCAVDLRD…DPQIDFSNID (275 aa)). Residues Asp84, His288, His290, and Asn324 each coordinate Mg(2+). The tract at residues 491 to 607 (PVQPLERIKQ…VSAVNRAMPR (117 aa)) is regulatory domain.

The protein belongs to the alpha-IPM synthase/homocitrate synthase family. LeuA type 2 subfamily. As to quaternary structure, homodimer. Mg(2+) is required as a cofactor.

The protein resides in the cytoplasm. The enzyme catalyses 3-methyl-2-oxobutanoate + acetyl-CoA + H2O = (2S)-2-isopropylmalate + CoA + H(+). The protein operates within amino-acid biosynthesis; L-leucine biosynthesis; L-leucine from 3-methyl-2-oxobutanoate: step 1/4. Its function is as follows. Catalyzes the condensation of the acetyl group of acetyl-CoA with 3-methyl-2-oxobutanoate (2-ketoisovalerate) to form 3-carboxy-3-hydroxy-4-methylpentanoate (2-isopropylmalate). The sequence is that of 2-isopropylmalate synthase from Mycobacterium leprae (strain TN).